Here is a 107-residue protein sequence, read N- to C-terminus: MMKALVVVALLVTLISYSSSEGIDDLEADELLSLMANEQTRKECIPKHHECTSNKHGCCRGNFFKYKCQCTTVVTQDGEQTERCFCGTPPHHKAAELVVGFGKKIFG.

Residues 1 to 20 form the signal peptide; sequence MMKALVVVALLVTLISYSSS. A propeptide spanning residues 21 to 41 is cleaved from the precursor; that stretch reads EGIDDLEADELLSLMANEQTR. 4 cysteine pairs are disulfide-bonded: Cys-44/Cys-59, Cys-51/Cys-68, Cys-58/Cys-86, and Cys-70/Cys-84.

This sequence belongs to the neurotoxin 19 (CSTX) family. 04 (U1-Lctx) subfamily. As to expression, expressed by the venom gland.

The protein localises to the secreted. The sequence is that of U1-lycotoxin-Ls1b from Lycosa singoriensis (Wolf spider).